The primary structure comprises 358 residues: Putative zinc metalloprotease RC0203 (358 aa).

Histidine 18 contributes to the Zn(2+) binding site. Residue glutamate 19 is part of the active site. Histidine 22 contacts Zn(2+). 4 helical membrane passes run 52 to 71 (GVRW…IYGY), 97 to 119 (FLIV…AGFY), 285 to 307 (YLLF…IPVL), and 332 to 351 (ILLQ…AVSN). The region spanning 102–186 (AGPLINYLLA…STLTIERKSE (85 aa)) is the PDZ domain.

The protein belongs to the peptidase M50B family. The cofactor is Zn(2+).

The protein resides in the cell inner membrane. This chain is Putative zinc metalloprotease RC0203, found in Rickettsia conorii (strain ATCC VR-613 / Malish 7).